Reading from the N-terminus, the 101-residue chain is MAKKSMKNRELKRQLTVAKYAKKRAELKAIIVDLNASPEARWEATVALQKQPRDASAARMRNRCRITGRPHGVYRKFGLGRNKLREAAMRGDVPGLVKASW.

This sequence belongs to the universal ribosomal protein uS14 family. As to quaternary structure, part of the 30S ribosomal subunit. Contacts proteins S3 and S10.

Functionally, binds 16S rRNA, required for the assembly of 30S particles and may also be responsible for determining the conformation of the 16S rRNA at the A site. This Pseudomonas syringae pv. tomato (strain ATCC BAA-871 / DC3000) protein is Small ribosomal subunit protein uS14.